Here is a 217-residue protein sequence, read N- to C-terminus: Probable GTP-binding protein EngB (217 aa).

Residues 29 to 213 (GPSEVAFAGR…RQAIAQTVGI (185 aa)) enclose the EngB-type G domain. GTP-binding positions include 37–44 (GRSNVGKS), 64–68 (GRTQE), 91–94 (DMPG), 158–161 (TKTD), and 192–194 (TSS). The Mg(2+) site is built by serine 44 and threonine 66.

It belongs to the TRAFAC class TrmE-Era-EngA-EngB-Septin-like GTPase superfamily. EngB GTPase family. The cofactor is Mg(2+).

In terms of biological role, necessary for normal cell division and for the maintenance of normal septation. This is Probable GTP-binding protein EngB from Rhizobium etli (strain CIAT 652).